The chain runs to 346 residues: Inositol 2-dehydrogenase/D-chiro-inositol 3-dehydrogenase (346 aa).

The protein belongs to the Gfo/Idh/MocA family. In terms of assembly, homotetramer.

It catalyses the reaction myo-inositol + NAD(+) = scyllo-inosose + NADH + H(+). The enzyme catalyses 1D-chiro-inositol + NAD(+) = scyllo-inosine + NADH + H(+). It participates in polyol metabolism; myo-inositol degradation into acetyl-CoA; acetyl-CoA from myo-inositol: step 1/7. Involved in the oxidation of myo-inositol (MI) and D-chiro-inositol (DCI) to 2-keto-myo-inositol (2KMI or 2-inosose) and 1-keto-D-chiro-inositol (1KDCI), respectively. The polypeptide is Inositol 2-dehydrogenase/D-chiro-inositol 3-dehydrogenase (Lacticaseibacillus casei (Lactobacillus casei)).